The sequence spans 322 residues: Acetyl-coenzyme A carboxylase carboxyl transferase subunit alpha 2 (322 aa).

The 258-residue stretch at 37–294 (EINRLSARSE…KRVLQESLRN (258 aa)) folds into the CoA carboxyltransferase C-terminal domain.

Belongs to the AccA family. Acetyl-CoA carboxylase is a heterohexamer composed of biotin carboxyl carrier protein (AccB), biotin carboxylase (AccC) and two subunits each of ACCase subunit alpha (AccA) and ACCase subunit beta (AccD).

Its subcellular location is the cytoplasm. It catalyses the reaction N(6)-carboxybiotinyl-L-lysyl-[protein] + acetyl-CoA = N(6)-biotinyl-L-lysyl-[protein] + malonyl-CoA. The protein operates within lipid metabolism; malonyl-CoA biosynthesis; malonyl-CoA from acetyl-CoA: step 1/1. In terms of biological role, component of the acetyl coenzyme A carboxylase (ACC) complex. First, biotin carboxylase catalyzes the carboxylation of biotin on its carrier protein (BCCP) and then the CO(2) group is transferred by the carboxyltransferase to acetyl-CoA to form malonyl-CoA. Its function is as follows. Confers resistance to the endogenous polyketide antibiotic thailandamide. Can replace the endogenous gene in S.typhimurium, conferring slow growth and resistance to thailandamide. Can also replace the endogenous gene in E.coli, conferring resistance to thailandamide. The sequence is that of Acetyl-coenzyme A carboxylase carboxyl transferase subunit alpha 2 from Burkholderia thailandensis (strain ATCC 700388 / DSM 13276 / CCUG 48851 / CIP 106301 / E264).